A 479-amino-acid polypeptide reads, in one-letter code: Adenosylhomocysteinase (479 aa).

Substrate is bound by residues Thr65, Asp144, and Glu204. Residue 205–207 coordinates NAD(+); the sequence is TTT. Lys234 and Asp238 together coordinate substrate. Residues Asn239, 268–273, Glu291, Asn326, 347–349, and Asn392 contribute to the NAD(+) site; these read GYGDVG and IGH.

It belongs to the adenosylhomocysteinase family. Requires NAD(+) as cofactor.

It is found in the cytoplasm. The enzyme catalyses S-adenosyl-L-homocysteine + H2O = L-homocysteine + adenosine. It functions in the pathway amino-acid biosynthesis; L-homocysteine biosynthesis; L-homocysteine from S-adenosyl-L-homocysteine: step 1/1. Its function is as follows. May play a key role in the regulation of the intracellular concentration of adenosylhomocysteine. This Variovorax paradoxus (strain S110) protein is Adenosylhomocysteinase.